We begin with the raw amino-acid sequence, 274 residues long: 3-methyl-2-oxobutanoate hydroxymethyltransferase (274 aa).

The Mg(2+) site is built by Asp-49 and Asp-88. 3-methyl-2-oxobutanoate contacts are provided by residues 49-50 (DS), Asp-88, and Lys-118. Glu-120 serves as a coordination point for Mg(2+). Glu-187 serves as the catalytic Proton acceptor.

This sequence belongs to the PanB family. Homodecamer; pentamer of dimers. The cofactor is Mg(2+).

Its subcellular location is the cytoplasm. It catalyses the reaction 3-methyl-2-oxobutanoate + (6R)-5,10-methylene-5,6,7,8-tetrahydrofolate + H2O = 2-dehydropantoate + (6S)-5,6,7,8-tetrahydrofolate. It functions in the pathway cofactor biosynthesis; (R)-pantothenate biosynthesis; (R)-pantoate from 3-methyl-2-oxobutanoate: step 1/2. Functionally, catalyzes the reversible reaction in which hydroxymethyl group from 5,10-methylenetetrahydrofolate is transferred onto alpha-ketoisovalerate to form ketopantoate. The protein is 3-methyl-2-oxobutanoate hydroxymethyltransferase of Parvibaculum lavamentivorans (strain DS-1 / DSM 13023 / NCIMB 13966).